A 184-amino-acid chain; its full sequence is MSRLAKKPIVLPQGVTVEIKDNVVKVKGPKGELSQEFLPYVKIEVEGNEVWVRPNEEQIIRKSDWRKVKMFQGTYWSLIRNMVVGVTEGYKKELEIVGIGYRAQLQGNTLVMNLGYAHPVVYEIPSDVKIEVPAPNRIIVSGIDKQRVGQVAAEIRAFRPPNVYTGKGIRYVGEVVRQKEGKKA.

Belongs to the universal ribosomal protein uL6 family. In terms of assembly, part of the 50S ribosomal subunit.

Functionally, this protein binds to the 23S rRNA, and is important in its secondary structure. It is located near the subunit interface in the base of the L7/L12 stalk, and near the tRNA binding site of the peptidyltransferase center. The protein is Large ribosomal subunit protein uL6 of Thermotoga maritima (strain ATCC 43589 / DSM 3109 / JCM 10099 / NBRC 100826 / MSB8).